Reading from the N-terminus, the 57-residue chain is Large ribosomal subunit protein bL32 (57 aa).

Residues 1-22 (MAVPKKKTSKSKRDKRRATWRH) are disordered.

It belongs to the bacterial ribosomal protein bL32 family.

The polypeptide is Large ribosomal subunit protein bL32 (Nostoc punctiforme (strain ATCC 29133 / PCC 73102)).